Here is a 317-residue protein sequence, read N- to C-terminus: Thymidylate synthase (317 aa).

DUMP is bound by residues R40 and 167 to 168 (RR). The Nucleophile role is filled by C187. Residues 216-219 (RSCD), N227, and 257-259 (HVY) contribute to the dUMP site. D219 serves as a coordination point for (6R)-5,10-methylene-5,6,7,8-tetrahydrofolate.

This sequence belongs to the thymidylate synthase family. Homodimer.

It catalyses the reaction dUMP + (6R)-5,10-methylene-5,6,7,8-tetrahydrofolate = 7,8-dihydrofolate + dTMP. The protein operates within pyrimidine metabolism; dTTP biosynthesis. The chain is Thymidylate synthase (TMP1) from Cryptococcus neoformans var. neoformans serotype D (strain B-3501A) (Filobasidiella neoformans).